The following is a 428-amino-acid chain: Enolase (428 aa).

Gln164 serves as a coordination point for (2R)-2-phosphoglycerate. Glu208 functions as the Proton donor in the catalytic mechanism. Mg(2+) is bound by residues Asp245, Glu286, and Asp313. 4 residues coordinate (2R)-2-phosphoglycerate: Lys338, Arg367, Ser368, and Lys389. Residue Lys338 is the Proton acceptor of the active site.

It belongs to the enolase family. The cofactor is Mg(2+).

Its subcellular location is the cytoplasm. It localises to the secreted. It is found in the cell surface. It catalyses the reaction (2R)-2-phosphoglycerate = phosphoenolpyruvate + H2O. It participates in carbohydrate degradation; glycolysis; pyruvate from D-glyceraldehyde 3-phosphate: step 4/5. Catalyzes the reversible conversion of 2-phosphoglycerate (2-PG) into phosphoenolpyruvate (PEP). It is essential for the degradation of carbohydrates via glycolysis. The polypeptide is Enolase (Pyrococcus abyssi (strain GE5 / Orsay)).